The following is a 172-amino-acid chain: Transmembrane protein 91 (172 aa).

Topologically, residues 1-97 (MDNSSIQELQ…SPLLPHDHLG (97 aa)) are extracellular. The disordered stretch occupies residues 60-86 (GLGEPETPDFEDTLSSDSDSDDDGGDR). The span at 65–83 (ETPDFEDTLSSDSDSDDDG) shows a compositional bias: acidic residues. Residues 98 to 118 (LAVFSVLCCFWPVGIAAFCLA) traverse the membrane as a helical segment. At 119–139 (HKTNKAWAKGDVQGAGAASRR) the chain is on the cytoplasmic side. Residues 140-160 (AFLLGVLAVGLGLCTYAAALV) traverse the membrane as a helical segment. The Extracellular portion of the chain corresponds to 161–172 (TLAAYLASRDPP).

Belongs to the CD225/Dispanin family.

Its subcellular location is the membrane. The protein is Transmembrane protein 91 (Tmem91) of Mus musculus (Mouse).